We begin with the raw amino-acid sequence, 84 residues long: Mu-Sparatoxin-Hp1 (84 aa).

Positions 1–20 (MKIAIVMTLLLVAFSTASFA) are cleaved as a signal peptide. Positions 21–35 (IEPIERAALDLVMAR) are excised as a propeptide. 3 cysteine pairs are disulfide-bonded: Cys54-Cys68, Cys61-Cys73, and Cys67-Cys78. Position 82 is a leucine amide (Leu82).

As to expression, expressed by the venom gland.

It is found in the secreted. Functionally, weakly nhibits voltage-gated sodium channels Nav1.7/SCN9A. High concentration of the toxin (3 uM) inhibits Nav1.7/SCN9A currents by 79%. The polypeptide is Mu-Sparatoxin-Hp1 (Heteropoda pingtungensis (Pingtung huntsman spider)).